The primary structure comprises 302 residues: Protein KTI12 homolog (302 aa).

Gly-8–Ser-15 contributes to the ATP binding site. Residues Leu-260–Leu-273 form a calmodulin-binding region.

Belongs to the KTI12 family. In terms of assembly, interacts with the elongator complex. Binds to calmodulin in a calcium-dependent manner. In terms of tissue distribution, expressed in roots, hypocotyls, cotyledons, shoot apices, stems, inflorescence apices, leaves and flowers.

The protein localises to the cytoplasm. The protein resides in the nucleus. Elongator complex-associated factor that is not a structural subunit but rather transiently contacts the complex. Regulates both meristem activity and organ growth; acts as a positive regulator of adaxial leaf patterning by modulating both cell division and differentiation. Required for an early step in synthesis of 5-carbamoylmethyl (ncm5) groups present on uridines (ncm5U) at the wobble position in tRNA. In Arabidopsis thaliana (Mouse-ear cress), this protein is Protein KTI12 homolog.